Here is a 194-residue protein sequence, read N- to C-terminus: Peptidyl-tRNA hydrolase (194 aa).

Residue Tyr-17 participates in tRNA binding. The active-site Proton acceptor is the His-22. TRNA-binding residues include Tyr-69, Asn-71, and Asn-117.

This sequence belongs to the PTH family. As to quaternary structure, monomer.

It is found in the cytoplasm. The catalysed reaction is an N-acyl-L-alpha-aminoacyl-tRNA + H2O = an N-acyl-L-amino acid + a tRNA + H(+). In terms of biological role, hydrolyzes ribosome-free peptidyl-tRNAs (with 1 or more amino acids incorporated), which drop off the ribosome during protein synthesis, or as a result of ribosome stalling. Its function is as follows. Catalyzes the release of premature peptidyl moieties from peptidyl-tRNA molecules trapped in stalled 50S ribosomal subunits, and thus maintains levels of free tRNAs and 50S ribosomes. The chain is Peptidyl-tRNA hydrolase from Paenarthrobacter aurescens (strain TC1).